A 244-amino-acid chain; its full sequence is Ubiquitin carboxyl-terminal hydrolase mug105 (244 aa).

Cys-42 serves as the catalytic Nucleophile. His-165 (proton acceptor) is an active-site residue. Asp-183 is a catalytic residue.

It belongs to the peptidase C78 family. ZUFSP subfamily.

It localises to the cytoplasm. The catalysed reaction is Thiol-dependent hydrolysis of ester, thioester, amide, peptide and isopeptide bonds formed by the C-terminal Gly of ubiquitin (a 76-residue protein attached to proteins as an intracellular targeting signal).. Its function is as follows. Deubiquitinase with endodeubiquitinase activity that preferentially cleaves 'Lys-48'-linked polyubiquitin chains. Shows only weak activity against 'Lys-63' and 'Lys-11'-linked chains. Has a role in meiosis. The chain is Ubiquitin carboxyl-terminal hydrolase mug105 (mug105) from Schizosaccharomyces pombe (strain 972 / ATCC 24843) (Fission yeast).